The chain runs to 132 residues: PGA2-homolog C27.01c (132 aa).

The helical transmembrane segment at 17-34 (WIRIIVYVGGYMLIRPYL) threads the bilayer. Disordered stretches follow at residues 50–90 (LLEG…DAEF) and 106–132 (EYFK…HLED). A compositionally biased stretch (basic and acidic residues) spans 62 to 75 (EMTHGTKPKEHGEF). The segment covering 76–87 (DTDDEEEEENPD) has biased composition (acidic residues). Phosphothreonine is present on threonine 77. Positions 106 to 115 (EYFKNQDKSP) are enriched in basic and acidic residues. A compositionally biased stretch (acidic residues) spans 119-132 (YADDDEDIEEHLED).

The protein belongs to the PGA2 family.

It localises to the endoplasmic reticulum membrane. The protein resides in the nucleus membrane. In terms of biological role, involved processing and trafficking glycosylated proteins. This is PGA2-homolog C27.01c from Schizosaccharomyces pombe (strain 972 / ATCC 24843) (Fission yeast).